We begin with the raw amino-acid sequence, 189 residues long: Phosphoheptose isomerase (189 aa).

The 156-residue stretch at leucine 34–lysine 189 folds into the SIS domain. Asparagine 49–glycine 51 provides a ligand contact to substrate. 2 residues coordinate Zn(2+): histidine 58 and glutamate 62. Residues glutamate 62, asparagine 91–aspartate 92, serine 117–serine 119, serine 122, and glutamine 169 contribute to the substrate site. Zn(2+) is bound by residues glutamine 169 and histidine 177.

The protein belongs to the SIS family. GmhA subfamily. In terms of assembly, homotetramer. Zn(2+) is required as a cofactor.

The protein resides in the cytoplasm. The catalysed reaction is 2 D-sedoheptulose 7-phosphate = D-glycero-alpha-D-manno-heptose 7-phosphate + D-glycero-beta-D-manno-heptose 7-phosphate. It functions in the pathway carbohydrate biosynthesis; D-glycero-D-manno-heptose 7-phosphate biosynthesis; D-glycero-alpha-D-manno-heptose 7-phosphate and D-glycero-beta-D-manno-heptose 7-phosphate from sedoheptulose 7-phosphate: step 1/1. Catalyzes the isomerization of sedoheptulose 7-phosphate in D-glycero-D-manno-heptose 7-phosphate. The polypeptide is Phosphoheptose isomerase (Geobacter metallireducens (strain ATCC 53774 / DSM 7210 / GS-15)).